The chain runs to 142 residues: Hemoglobin subunit alpha (142 aa).

The Globin domain maps to valine 2–arginine 142. The residue at position 4 (serine 4) is a Phosphoserine. Residue lysine 8 is modified to N6-succinyllysine. Threonine 9 carries the phosphothreonine modification. Lysine 12 is modified (N6-succinyllysine). Lysine 17 carries the N6-acetyllysine; alternate modification. At lysine 17 the chain carries N6-succinyllysine; alternate. Tyrosine 25 bears the Phosphotyrosine mark. A Phosphoserine modification is found at serine 36. Lysine 41 is subject to N6-succinyllysine. At serine 50 the chain carries Phosphoserine. Histidine 59 provides a ligand contact to O2. Histidine 88 is a heme b binding site. The residue at position 103 (serine 103) is a Phosphoserine. At threonine 109 the chain carries Phosphothreonine. Serine 125 and serine 132 each carry phosphoserine. 2 positions are modified to phosphothreonine: threonine 135 and threonine 138. Position 139 is a phosphoserine (serine 139).

Belongs to the globin family. In terms of assembly, heterotetramer of two alpha chains and two beta chains in adult hemoglobin A (HbA); two alpha chains and two delta chains in adult hemoglobin A2 (HbA2); two alpha chains and two epsilon chains in early embryonic hemoglobin Gower-2; two alpha chains and two gamma chains in fetal hemoglobin F (HbF). In terms of tissue distribution, red blood cells.

Involved in oxygen transport from the lung to the various peripheral tissues. Functionally, hemopressin acts as an antagonist peptide of the cannabinoid receptor CNR1. Hemopressin-binding efficiently blocks cannabinoid receptor CNR1 and subsequent signaling. This chain is Hemoglobin subunit alpha (HBA1), found in Pan paniscus (Pygmy chimpanzee).